Reading from the N-terminus, the 205-residue chain is Putative 3-methyladenine DNA glycosylase (205 aa).

It belongs to the DNA glycosylase MPG family.

The protein is Putative 3-methyladenine DNA glycosylase of Clostridium acetobutylicum (strain ATCC 824 / DSM 792 / JCM 1419 / IAM 19013 / LMG 5710 / NBRC 13948 / NRRL B-527 / VKM B-1787 / 2291 / W).